A 131-amino-acid chain; its full sequence is uncharacterized protein (131 aa).

A run of 2 helical transmembrane segments spans residues 5-25 (VQPIIAVLIALGAFGFLYVLV) and 34-54 (MAVTVIVAGIIIYFIVKYVMN). The disordered stretch occupies residues 62 to 131 (AAFKKAAKQS…KNKKKNRALF (70 aa)). Composition is skewed to basic residues over residues 66-92 (KAAKQSRRRMKEQKAKHRAGHKGRVSH) and 122-131 (KNKKKNRALF).

The protein localises to the cell membrane. This is an uncharacterized protein from Bacillus subtilis (strain 168).